A 450-amino-acid chain; its full sequence is 23S rRNA (uracil(1939)-C(5))-methyltransferase RlmD (450 aa).

The TRAM domain maps to 1–62; that stretch reads MPVAGPLEIV…PSYEQATLVD (62 aa). [4Fe-4S] cluster contacts are provided by cysteine 75, cysteine 81, cysteine 84, and cysteine 163. The S-adenosyl-L-methionine site is built by glutamine 271, phenylalanine 300, asparagine 305, glutamate 321, asparagine 349, and aspartate 370. Residue cysteine 406 is the Nucleophile of the active site.

It belongs to the class I-like SAM-binding methyltransferase superfamily. RNA M5U methyltransferase family. RlmD subfamily.

The enzyme catalyses uridine(1939) in 23S rRNA + S-adenosyl-L-methionine = 5-methyluridine(1939) in 23S rRNA + S-adenosyl-L-homocysteine + H(+). Catalyzes the formation of 5-methyl-uridine at position 1939 (m5U1939) in 23S rRNA. The sequence is that of 23S rRNA (uracil(1939)-C(5))-methyltransferase RlmD from Ralstonia nicotianae (strain ATCC BAA-1114 / GMI1000) (Ralstonia solanacearum).